The chain runs to 389 residues: Succinate--CoA ligase [ADP-forming] subunit beta (389 aa).

Positions K9–T244 constitute an ATP-grasp domain. ATP-binding positions include K46, G53–G55, G102, and E107. 2 residues coordinate Mg(2+): N199 and D213. Substrate is bound by residues N264 and G321–V323.

Belongs to the succinate/malate CoA ligase beta subunit family. In terms of assembly, heterotetramer of two alpha and two beta subunits. The cofactor is Mg(2+).

It catalyses the reaction succinate + ATP + CoA = succinyl-CoA + ADP + phosphate. It carries out the reaction GTP + succinate + CoA = succinyl-CoA + GDP + phosphate. It participates in carbohydrate metabolism; tricarboxylic acid cycle; succinate from succinyl-CoA (ligase route): step 1/1. In terms of biological role, succinyl-CoA synthetase functions in the citric acid cycle (TCA), coupling the hydrolysis of succinyl-CoA to the synthesis of either ATP or GTP and thus represents the only step of substrate-level phosphorylation in the TCA. The beta subunit provides nucleotide specificity of the enzyme and binds the substrate succinate, while the binding sites for coenzyme A and phosphate are found in the alpha subunit. The polypeptide is Succinate--CoA ligase [ADP-forming] subunit beta (Xanthomonas axonopodis pv. citri (strain 306)).